Here is a 171-residue protein sequence, read N- to C-terminus: Shikimate kinase (171 aa).

11–16 (GTGKTT) provides a ligand contact to ATP. Threonine 15 provides a ligand contact to Mg(2+). The substrate site is built by aspartate 33, arginine 57, and glycine 79. Arginine 117 contacts ATP. Arginine 136 is a substrate binding site.

This sequence belongs to the shikimate kinase family. As to quaternary structure, monomer. Mg(2+) is required as a cofactor.

Its subcellular location is the cytoplasm. The enzyme catalyses shikimate + ATP = 3-phosphoshikimate + ADP + H(+). The protein operates within metabolic intermediate biosynthesis; chorismate biosynthesis; chorismate from D-erythrose 4-phosphate and phosphoenolpyruvate: step 5/7. Its function is as follows. Catalyzes the specific phosphorylation of the 3-hydroxyl group of shikimic acid using ATP as a cosubstrate. The polypeptide is Shikimate kinase (Caldanaerobacter subterraneus subsp. tengcongensis (strain DSM 15242 / JCM 11007 / NBRC 100824 / MB4) (Thermoanaerobacter tengcongensis)).